Here is a 301-residue protein sequence, read N- to C-terminus: N-acetylmuramic acid 6-phosphate etherase (301 aa).

In terms of domain architecture, SIS spans 55-215 (IADALRAGGR…STISMVALGK (161 aa)). Catalysis depends on Glu83, which acts as the Proton donor. Glu111 is an active-site residue.

Belongs to the GCKR-like family. MurNAc-6-P etherase subfamily. In terms of assembly, homodimer.

The enzyme catalyses N-acetyl-D-muramate 6-phosphate + H2O = N-acetyl-D-glucosamine 6-phosphate + (R)-lactate. The protein operates within amino-sugar metabolism; 1,6-anhydro-N-acetylmuramate degradation. It functions in the pathway amino-sugar metabolism; N-acetylmuramate degradation. It participates in cell wall biogenesis; peptidoglycan recycling. Functionally, specifically catalyzes the cleavage of the D-lactyl ether substituent of MurNAc 6-phosphate, producing GlcNAc 6-phosphate and D-lactate. Together with AnmK, is also required for the utilization of anhydro-N-acetylmuramic acid (anhMurNAc) either imported from the medium or derived from its own cell wall murein, and thus plays a role in cell wall recycling. This Burkholderia lata (strain ATCC 17760 / DSM 23089 / LMG 22485 / NCIMB 9086 / R18194 / 383) protein is N-acetylmuramic acid 6-phosphate etherase.